The following is a 55-amino-acid chain: Small polypeptide DEVIL 10 (55 aa).

An N-linked (GlcNAc...) asparagine glycan is attached at asparagine 7. The required for DVL/RTFL small polypeptide activity stretch occupies residues 19–50 (RFGDRCLLMAKQQRTRLYILRRCVSMLLCWHD). The helical transmembrane segment at 32–48 (RTRLYILRRCVSMLLCW) threads the bilayer.

It belongs to the DVL/RTFL small polypeptides family.

It is found in the cell membrane. In terms of biological role, small polypeptide acting as a regulatory molecule which coordinates cellular responses required for differentiation, growth and development, probably by restricting polar cell proliferation in lateral organs and coordinating socket cell recruitment and differentiation at trichome sites. The chain is Small polypeptide DEVIL 10 from Arabidopsis thaliana (Mouse-ear cress).